An 87-amino-acid polypeptide reads, in one-letter code: Large ribosomal subunit protein bL31B (87 aa).

Belongs to the bacterial ribosomal protein bL31 family. Type B subfamily. Part of the 50S ribosomal subunit.

This is Large ribosomal subunit protein bL31B from Pseudomonas paraeruginosa (strain DSM 24068 / PA7) (Pseudomonas aeruginosa (strain PA7)).